A 420-amino-acid polypeptide reads, in one-letter code: Protein-lysine N-trimethyltransferase SMYD5 (420 aa).

An SET domain is found at 29–358 (AEARFISSAK…AGEEICISYL (330 aa)). The MYND-type zinc-finger motif lies at 104–142 (PEQCSIRKDLHQQCPRCQVTYCSAECRQAALEQYHQVLC). Y357 lines the S-adenosyl-L-methionine pocket. Residues 392-420 (DDPDVTSDEEEEAEGETDDAELEDEMTDV) form a disordered region.

The protein belongs to the class V-like SAM-binding methyltransferase superfamily.

Its subcellular location is the cytoplasm. It carries out the reaction L-lysyl-[protein] + 3 S-adenosyl-L-methionine = N(6),N(6),N(6)-trimethyl-L-lysyl-[protein] + 3 S-adenosyl-L-homocysteine + 3 H(+). The enzyme catalyses L-lysyl(20)-[histone H4] + 3 S-adenosyl-L-methionine = N(6),N(6),N(6)-trimethyl-L-lysyl(20)-[histone H4] + 3 S-adenosyl-L-homocysteine + 3 H(+). The catalysed reaction is L-lysyl(36)-[histone H3] + 3 S-adenosyl-L-methionine = N(6),N(6),N(6)-trimethyl-L-lysyl(36)-[histone H3] + 3 S-adenosyl-L-homocysteine + 3 H(+). Its function is as follows. Protein-lysine N-trimethyltransferase that specifically catalyzes trimethylation of 'Lys-22' of the RPL40/eL40 subunit of the 60S ribosome, thereby promoting translation elongation and protein synthesis. May also act as a histone methyltransferase in the context of histone octamers, but not on nucleosome substrates: trimethylates 'Lys-36' of histone H3 and 'Lys-20' of histone H4 to form H3K36me3 and H4K20me3, respectively. The histone methyltransferase activity, which is independent of its SET domain, is however unsure in vivo. The chain is Protein-lysine N-trimethyltransferase SMYD5 (SMYD5) from Gallus gallus (Chicken).